Here is a 307-residue protein sequence, read N- to C-terminus: Streptomycin 6-kinase (307 aa).

133-145 (LAGLLNRLHSVPA) contacts streptomycin. Asp201 functions as the Proton acceptor in the catalytic mechanism.

This sequence belongs to the aminoglycoside phosphotransferase family.

The catalysed reaction is streptomycin + ATP = streptomycin 6-phosphate + ADP + H(+). Its function is as follows. The aminoglycoside phosphotransferases achieve inactivation of their antibiotic substrates by phosphorylation. This Streptomyces griseus protein is Streptomycin 6-kinase (aphD).